The following is a 345-amino-acid chain: Platelet-derived growth factor C (345 aa).

Residues 1 to 22 form the signal peptide; sequence MLLLGLLLLTSALAGQRTGTRA. The segment covering 24–33 has biased composition (polar residues); it reads SNLSSKLQLS. The segment at 24 to 45 is disordered; it reads SNLSSKLQLSSDKEQNGVQDPR. N-linked (GlcNAc...) asparagine glycosylation is present at Asn-25. Basic and acidic residues predominate over residues 34–45; sequence SDKEQNGVQDPR. In terms of domain architecture, CUB spans 46–163; it reads HERVVTISGN…PGFCIHYSII (118 aa). Asn-55 is a glycosylation site (N-linked (GlcNAc...) asparagine). 4 cysteine pairs are disulfide-bonded: Cys-104/Cys-124, Cys-250/Cys-294, Cys-280/Cys-335, and Cys-287/Cys-337.

This sequence belongs to the PDGF/VEGF growth factor family. In terms of assembly, homodimer; disulfide-linked. Interacts with PDGFRA homodimers, and with heterodimers formed by PDGFRA and PDGFRB. Interacts (via CUB domain) with PLAT (via kringle domain). In terms of processing, proteolytic removal of the N-terminal CUB domain releasing the core domain is necessary for unmasking the receptor-binding epitopes of the core domain. Cleavage after basic residues in the hinge region (region connecting the CUB and growth factor domains) gives rise to the receptor-binding form. Cleaved by PLAT and PLG. Post-translationally, sumoylated with SUMO1. N-glycosylated. In terms of tissue distribution, highly expressed in the kidney and adrenal gland. In the kidney, it is expressed in arteriolar smooth muscle cells and in epithelial cells of individual segments (at protein level).

Its subcellular location is the cytoplasm. It localises to the cytosol. It is found in the secreted. The protein localises to the nucleus. The protein resides in the cytoplasmic granule. Its subcellular location is the cell membrane. Growth factor that plays an essential role in the regulation of embryonic development, cell proliferation, cell migration, survival and chemotaxis. Potent mitogen and chemoattractant for cells of mesenchymal origin. Required for normal skeleton formation during embryonic development, especially for normal development of the craniofacial skeleton and for normal development of the palate. Required for normal skin morphogenesis during embryonic development. Plays an important role in wound healing, where it appears to be involved in three stages: inflammation, proliferation and remodeling. Plays an important role in angiogenesis and blood vessel development. Involved in fibrotic processes, in which transformation of interstitial fibroblasts into myofibroblasts plus collagen deposition occurs. The CUB domain has mitogenic activity in coronary artery smooth muscle cells, suggesting a role beyond the maintenance of the latency of the PDGF domain. In the nucleus, PDGFC seems to have additional function. This is Platelet-derived growth factor C (Pdgfc) from Rattus norvegicus (Rat).